A 260-amino-acid chain; its full sequence is Aliphatic sulfonates import ATP-binding protein SsuB 1 (260 aa).

The ABC transporter domain maps to 29–243 (VRVDGLTRSF…DITDPRFAEL (215 aa)). Position 61-68 (61-68 (GRSGCGKS)) interacts with ATP.

This sequence belongs to the ABC transporter superfamily. Aliphatic sulfonates importer (TC 3.A.1.17.2) family. As to quaternary structure, the complex is composed of two ATP-binding proteins (SsuB), two transmembrane proteins (SsuC) and a solute-binding protein (SsuA).

The protein localises to the cell membrane. It carries out the reaction ATP + H2O + aliphatic sulfonate-[sulfonate-binding protein]Side 1 = ADP + phosphate + aliphatic sulfonateSide 2 + [sulfonate-binding protein]Side 1.. Its function is as follows. Part of the ABC transporter complex SsuABC involved in aliphatic sulfonates import. Responsible for energy coupling to the transport system. This is Aliphatic sulfonates import ATP-binding protein SsuB 1 from Streptomyces avermitilis (strain ATCC 31267 / DSM 46492 / JCM 5070 / NBRC 14893 / NCIMB 12804 / NRRL 8165 / MA-4680).